Consider the following 535-residue polypeptide: High affinity immunoglobulin alpha and immunoglobulin mu Fc receptor (535 aa).

A signal peptide spans 1–35 (MDQGAPAKPSEQKVPSLRTRWEILLLTLCLLHGSS). The Extracellular segment spans residues 36-455 (MTPPHRRSHS…ALMEGESHTR (420 aa)). Residues 95–117 (GGAVTIHCHYAPSSVNRHQRKYW) form a mediates immunoglobulin Fc fragment-binding region. The 95-residue stretch at 95 to 189 (GGAVTIHCHY…DMLFFSVNLT (95 aa)) folds into the Ig-like V-type domain. An intrachain disulfide couples cysteine 102 to cysteine 173. Asparagine 187 carries N-linked (GlcNAc...) asparagine glycosylation. 2 disordered regions span residues 201–360 (AAPA…LISE) and 405–430 (EGRS…QLSV). Low complexity-rich tracts occupy residues 208–220 (PTTA…SSAG) and 241–253 (TVPT…TTSS). Over residues 291–328 (KSRSMSSTTQGVWLWSTRNSVTPSVTTSEGRRQGTTPE) the composition is skewed to polar residues. Basic and acidic residues predominate over residues 330–346 (DGPRDETDVRVSPEAPR). Over residues 413–429 (LENTTEESSPPTPSQLS) the composition is skewed to polar residues. A helical membrane pass occupies residues 456-476 (ILTPVSTVLALLLIAALILLK). Residues 477–535 (RSLGRQRTSQKKERVPRITLIQMTHFLPDKLPDEGKNFQQSNLLPPQASLTVLENDPRP) are Cytoplasmic-facing. Residues 507–535 (LPDEGKNFQQSNLLPPQASLTVLENDPRP) are disordered. Residues 513–528 (NFQQSNLLPPQASLTV) are compositionally biased toward polar residues.

As to quaternary structure, interacts with IGHM; this interaction facilitates the endocytosis of IgM-coated microbes and IgM-antigen immune complexes. Post-translationally, N-glycosylated. As to expression, expressed in several tissues including thymus, spleen, liver, kidney, small and large intestine, testis and placenta. Expressed by oligodendrocytes, B-cells and macrophages but not granulocytes, T-cells or NK cells (at protein level).

Its subcellular location is the cell membrane. Functions as a receptor for the Fc fragment of IgA and IgM. Binds IgA and IgM with high affinity and mediates their endocytosis. May function in the immune response to microbes mediated by IgA and IgM. This is High affinity immunoglobulin alpha and immunoglobulin mu Fc receptor (Fcamr) from Mus musculus (Mouse).